A 962-amino-acid chain; its full sequence is Protein kinase ORF73 (962 aa).

Disordered stretches follow at residues 1-28 (MADR…NDRP) and 62-152 (STPA…RATT). Residues 81–90 (DSDDDDEEDN) show a composition bias toward acidic residues. Residues 143–152 (YDTTGRRATT) show a composition bias toward polar residues. In terms of domain architecture, Protein kinase spans 301–595 (LRAAPVLGKG…ASDLLKSPRY (295 aa)). ATP-binding positions include 307 to 315 (LGKGYFGTV) and K324. D434 (proton acceptor) is an active-site residue.

Belongs to the protein kinase superfamily. Ser/Thr protein kinase family.

It catalyses the reaction L-seryl-[protein] + ATP = O-phospho-L-seryl-[protein] + ADP + H(+). The catalysed reaction is L-threonyl-[protein] + ATP = O-phospho-L-threonyl-[protein] + ADP + H(+). The polypeptide is Protein kinase ORF73 (ORF73) (Ictaluridae (bullhead catfishes)).